We begin with the raw amino-acid sequence, 412 residues long: Sterol-4-alpha-carboxylate 3-dehydrogenase erg26, decarboxylating (412 aa).

Residues 17-23 (GGCGFLG), 89-90 (DI), and 111-113 (TAT) contribute to the NADP(+) site. Positions 158 and 188 each coordinate substrate. NADP(+)-binding positions include Tyr188, Lys192, and 217–220 (PAGI). Lys192 acts as the Proton donor in catalysis.

The protein belongs to the 3-beta-HSD family. Heterotetramer of erg25, erg26, erg27 and erg28. Erg28 acts as a scaffold to tether erg27 and other 4,4-demethylation-related enzymes, forming a demethylation enzyme complex, in the endoplasmic reticulum.

It is found in the endoplasmic reticulum membrane. It functions in the pathway steroid metabolism; ergosterol biosynthesis. Sterol-C4-methyl oxidase; part of the third module of ergosterol biosynthesis pathway that includes the late steps of the pathway. Erg26 is a catalytic component of the C-4 demethylation complex that catalyzes the conversion of 4,4-dimethylfecosterol into fecosterol via 4-methylfecosterol. The third module or late pathway involves the ergosterol synthesis itself through consecutive reactions that mainly occur in the endoplasmic reticulum (ER) membrane. Firstly, the squalene synthase erg9 catalyzes the condensation of 2 farnesyl pyrophosphate moieties to form squalene, which is the precursor of all steroids. Squalene synthase is crucial for balancing the incorporation of farnesyl diphosphate (FPP) into sterol and nonsterol isoprene synthesis. Secondly, squalene is converted into lanosterol by the consecutive action of the squalene epoxidase erg1 and the lanosterol synthase erg7. Then, the delta(24)-sterol C-methyltransferase erg6 methylates lanosterol at C-24 to produce eburicol. Eburicol is the substrate of the sterol 14-alpha demethylase encoded by cyp51A and cyp51B, to yield 4,4,24-trimethyl ergosta-8,14,24(28)-trienol. The C-14 reductase erg24 then reduces the C14=C15 double bond which leads to 4,4-dimethylfecosterol. A sequence of further demethylations at C-4, involving the C-4 demethylation complex containing the C-4 methylsterol oxidases erg25A or erg25B, the sterol-4-alpha-carboxylate 3-dehydrogenase erg26 and the 3-keto-steroid reductase erg27, leads to the production of fecosterol via 4-methylfecosterol. The C-8 sterol isomerase erg2 then catalyzes the reaction which results in unsaturation at C-7 in the B ring of sterols and thus converts fecosterol to episterol. The sterol-C5-desaturase erg3B then catalyzes the introduction of a C-5 double bond in the B ring to produce 5-dehydroepisterol. The 2 other sterol-C5-desaturases, erg3A and erg3C, seem to be less important in ergosterol biosynthesis. The C-22 sterol desaturase erg5 further converts 5-dehydroepisterol into ergosta-5,7,22,24(28)-tetraen-3beta-ol by forming the C-22(23) double bond in the sterol side chain. Finally, ergosta-5,7,22,24(28)-tetraen-3beta-ol is substrate of the C-24(28) sterol reductases erg4A and erg4B to produce ergosterol. Possible alternative sterol biosynthetic pathways might exist from fecosterol to ergosterol, depending on the activities of the erg3 isoforms. The protein is Sterol-4-alpha-carboxylate 3-dehydrogenase erg26, decarboxylating of Aspergillus fumigatus (strain ATCC MYA-4609 / CBS 101355 / FGSC A1100 / Af293) (Neosartorya fumigata).